The following is a 342-amino-acid chain: Glycerol-1-phosphate dehydrogenase [NAD(P)+] (342 aa).

Residues 84–88 (GRPID) and 106–109 (TSAS) contribute to the NAD(+) site. Aspartate 111 serves as a coordination point for substrate. Serine 115 provides a ligand contact to NAD(+). Aspartate 160 contacts substrate. 2 residues coordinate Zn(2+): aspartate 160 and histidine 241. Substrate is bound at residue histidine 245. Histidine 260 provides a ligand contact to Zn(2+).

It belongs to the glycerol-1-phosphate dehydrogenase family. In terms of assembly, homodimer. Zn(2+) is required as a cofactor.

It localises to the cytoplasm. It catalyses the reaction sn-glycerol 1-phosphate + NAD(+) = dihydroxyacetone phosphate + NADH + H(+). The enzyme catalyses sn-glycerol 1-phosphate + NADP(+) = dihydroxyacetone phosphate + NADPH + H(+). The protein operates within membrane lipid metabolism; glycerophospholipid metabolism. Catalyzes the NAD(P)H-dependent reduction of dihydroxyacetonephosphate (DHAP or glycerone phosphate) to glycerol 1-phosphate (G1P). The G1P thus generated is used as the glycerophosphate backbone of phospholipids in the cellular membranes of Archaea. The polypeptide is Glycerol-1-phosphate dehydrogenase [NAD(P)+] (Pyrobaculum arsenaticum (strain DSM 13514 / JCM 11321 / PZ6)).